Reading from the N-terminus, the 683-residue chain is Protein distal antenna (683 aa).

The HTH psq-type domain maps to 7–58 (TKGKRPLRSLTPRDKIHAIQRIHDGESKASVARDIGVPESTLRGWCKNEDKL). Residues 34-54 (KASVARDIGVPESTLRGWCKN) constitute a DNA-binding region (H-T-H motif). Disordered stretches follow at residues 220–255 (TANN…SVKN), 336–369 (SPPI…TPSG), 443–525 (SETP…SDCI), 572–597 (NQHS…DEEE), and 652–683 (EPQV…RRRK). Over residues 227–242 (SKPSVQPPLQVQSPRS) the composition is skewed to low complexity. Composition is skewed to polar residues over residues 338–352 (PIRS…QHAQ) and 445–460 (TPSV…NQLD). Over residues 462–478 (IEGDEVTDPDLDAEIEG) the composition is skewed to acidic residues. Over residues 575–591 (SNNNDISASNNNNNNSN) the composition is skewed to low complexity.

As to quaternary structure, homomers. Interacts with itself, danr, ey and dac to form a complex (or complexes) containing the RD factors.

It localises to the nucleus. Its function is as follows. Probable transcription factor with a role in the retinal determination (RD) network. Regulates ato expression and is required for normal R8 induction and differentiation. Danr appears to repress Dan expression, but Dan is required for Danr expression anterior to the morphogenetic furrow (MF). Dan and Danr lie downstream of so and require dac function for highest levels of expression. Contributes to differentiation of antenna-specific characteristics; effector gene that acts downstream of homothorax (hth), Distal-less (Dll), cut (ct) and spineless (ss) genes to control differentiation of distal antennal structures. In Drosophila pseudoobscura pseudoobscura (Fruit fly), this protein is Protein distal antenna.